We begin with the raw amino-acid sequence, 1168 residues long: Transcription-repair-coupling factor (1168 aa).

One can recognise a Helicase ATP-binding domain in the interval 633 to 794; it reads DMQKSRPMDR…MLGVRDLSVI (162 aa). Residue 646 to 653 participates in ATP binding; sequence GDVGYGKT. The DEEQ box motif lies at 747-750; it reads DEEQ. The Helicase C-terminal domain maps to 808–969; that stretch reads VLEQNMSFIK…GFKIAMRDLN (162 aa).

This sequence in the N-terminal section; belongs to the UvrB family. In the C-terminal section; belongs to the helicase family. RecG subfamily.

The protein localises to the cytoplasm. In terms of biological role, couples transcription and DNA repair by recognizing RNA polymerase (RNAP) stalled at DNA lesions. Mediates ATP-dependent release of RNAP and its truncated transcript from the DNA, and recruitment of nucleotide excision repair machinery to the damaged site. This is Transcription-repair-coupling factor from Staphylococcus aureus (strain MSSA476).